A 206-amino-acid chain; its full sequence is Imidazoleglycerol-phosphate dehydratase (206 aa).

The protein belongs to the imidazoleglycerol-phosphate dehydratase family.

The protein localises to the cytoplasm. It catalyses the reaction D-erythro-1-(imidazol-4-yl)glycerol 3-phosphate = 3-(imidazol-4-yl)-2-oxopropyl phosphate + H2O. The protein operates within amino-acid biosynthesis; L-histidine biosynthesis; L-histidine from 5-phospho-alpha-D-ribose 1-diphosphate: step 6/9. The sequence is that of Imidazoleglycerol-phosphate dehydratase from Mycolicibacterium smegmatis (strain ATCC 700084 / mc(2)155) (Mycobacterium smegmatis).